The sequence spans 471 residues: MAPKHQTPHTHAQIHTHPYRTLLTSFAAWKLFLFAIVLGSTLVGDAYDTSGGLLLQGPANGDAATRPAGLGTTLIARLTSWDAIYYVSAARRDYVFEQEWAFGAGLPFVVRTLLQGLEYVGIIDAPGAEGGRALVAEALAGILVANTAHLLSALVLYRLGQVVWRDQTLSLVAALLHVISPAGLFLSAPYSESSFALLSFSGYLLFALGCRAEGSSNSNNSPTRRDLYTISAGVLFGAATVFRSNGLLNGAPFALEVLRHLPAFVRRPTAIDTLRRLAALGVGGAAVAAGSLGPQAAAYLRYCIPSSSSGASDGEENLLLPRPWCQGYLPSIFTFVQQHYWNVGFLRYWTLPNLPLFLLATPMLVILVKSGVDSLRGRHLPGDAKAVDGESGRLLALIRSTAAAQVLLAVLAATTYHVQIITRISSGYPVWHWWLAGRLVQGDKTGSRIVMFMVIYASIQGALFASFLPPA.

8 helical membrane-spanning segments follow: residues 23–43 (LTSF…STLV), 135–155 (VAEA…SALV), 169–189 (LSLV…LSAP), 190–210 (YSES…ALGC), 227–247 (LYTI…SNGL), 277–297 (LAAL…PQAA), 348–368 (YWTL…VILV), and 449–469 (IVMF…SFLP).

It belongs to the PIGV family.

It is found in the endoplasmic reticulum membrane. The protein operates within glycolipid biosynthesis; glycosylphosphatidylinositol-anchor biosynthesis. Its function is as follows. Mannosyltransferase involved in glycosylphosphatidylinositol-anchor biosynthesis. Transfers the second mannose to the glycosylphosphatidylinositol during GPI precursor assembly. The chain is GPI mannosyltransferase 2 (GPI18) from Chaetomium globosum (strain ATCC 6205 / CBS 148.51 / DSM 1962 / NBRC 6347 / NRRL 1970) (Soil fungus).